The sequence spans 164 residues: Succinate dehydrogenase assembly factor 3, mitochondrial (164 aa).

The transit peptide at 1–51 (MRPTLLRLANASGPLPLSVSQASVQLIPPIPLYRRLLRAHRLLPVDMRYMG) directs the protein to the mitochondrion. A compositionally biased stretch (basic and acidic residues) spans 136-145 (KSPEQIEREA). Residues 136-164 (KSPEQIEREANSAGVSPVNPNDPTTAGNS) are disordered. A compositionally biased stretch (polar residues) spans 153 to 164 (VNPNDPTTAGNS).

This sequence belongs to the complex I LYR family. SDHAF3 subfamily. As to quaternary structure, interacts with the iron-sulfur protein subunit within the SDH catalytic dimer.

The protein resides in the mitochondrion matrix. Its function is as follows. Plays an essential role in the assembly of succinate dehydrogenase (SDH), an enzyme complex (also referred to as respiratory complex II) that is a component of both the tricarboxylic acid (TCA) cycle and the mitochondrial electron transport chain, and which couples the oxidation of succinate to fumarate with the reduction of ubiquinone (coenzyme Q) to ubiquinol. Promotes maturation of the iron-sulfur protein subunit of the SDH catalytic dimer, protecting it from the deleterious effects of oxidants. May act together with SDHAF1. This chain is Succinate dehydrogenase assembly factor 3, mitochondrial, found in Cryptococcus neoformans var. neoformans serotype D (strain B-3501A) (Filobasidiella neoformans).